Here is a 154-residue protein sequence, read N- to C-terminus: Lipoprotein signal peptidase (154 aa).

Transmembrane regions (helical) follow at residues Ile4–Ile24, Leu62–Ile82, and Gly84–Ile104. Active-site residues include Asp114 and Asp130. Residues Ile125–Trp145 form a helical membrane-spanning segment.

It belongs to the peptidase A8 family.

The protein localises to the cell membrane. The catalysed reaction is Release of signal peptides from bacterial membrane prolipoproteins. Hydrolyzes -Xaa-Yaa-Zaa-|-(S,diacylglyceryl)Cys-, in which Xaa is hydrophobic (preferably Leu), and Yaa (Ala or Ser) and Zaa (Gly or Ala) have small, neutral side chains.. It participates in protein modification; lipoprotein biosynthesis (signal peptide cleavage). In terms of biological role, this protein specifically catalyzes the removal of signal peptides from prolipoproteins. This chain is Lipoprotein signal peptidase, found in Streptococcus agalactiae serotype V (strain ATCC BAA-611 / 2603 V/R).